Consider the following 465-residue polypeptide: Mothers against decapentaplegic homolog 5 (465 aa).

Residues 13–137 (PAVKRLLGWK…YKRVESPVLP (125 aa)) enclose the MH1 domain. Zn(2+) is bound by residues C65, C110, C122, and H127. A disordered region spans residues 163–242 (NEPHMPHNAT…MGQDNSQSMD (80 aa)). Residues 173 to 183 (FPDSFQQPNST) are compositionally biased toward polar residues. The segment covering 198-214 (ASSTYPSSPASSGPSSP) has biased composition (low complexity). Residues 271-465 (WCSIVYYELN…SPLNPISSVS (195 aa)) form the MH2 domain.

This sequence belongs to the dwarfin/SMAD family. As to quaternary structure, may form trimers with the co-SMAD SMAD4.

It is found in the cytoplasm. The protein localises to the nucleus. Transcriptional modulator activated by BMP (bone morphogenetic proteins) type 1 receptor kinase. SMAD5 is a receptor-regulated SMAD (R-SMAD). This is Mothers against decapentaplegic homolog 5 (SMAD5) from Gallus gallus (Chicken).